We begin with the raw amino-acid sequence, 252 residues long: tRNA (guanine-N(1)-)-methyltransferase (252 aa).

Residues Gly113 and Ile133–Leu138 each bind S-adenosyl-L-methionine.

Belongs to the RNA methyltransferase TrmD family. In terms of assembly, homodimer.

Its subcellular location is the cytoplasm. The enzyme catalyses guanosine(37) in tRNA + S-adenosyl-L-methionine = N(1)-methylguanosine(37) in tRNA + S-adenosyl-L-homocysteine + H(+). Specifically methylates guanosine-37 in various tRNAs. The polypeptide is tRNA (guanine-N(1)-)-methyltransferase (Nitrosococcus oceani (strain ATCC 19707 / BCRC 17464 / JCM 30415 / NCIMB 11848 / C-107)).